A 636-amino-acid polypeptide reads, in one-letter code: Biosynthetic arginine decarboxylase (636 aa).

The residue at position 101 (lysine 101) is an N6-(pyridoxal phosphate)lysine. Residue 286-296 participates in substrate binding; it reads FDVGGGLAVDY.

This sequence belongs to the Orn/Lys/Arg decarboxylase class-II family. SpeA subfamily. Requires Mg(2+) as cofactor. Pyridoxal 5'-phosphate is required as a cofactor.

The enzyme catalyses L-arginine + H(+) = agmatine + CO2. It functions in the pathway amine and polyamine biosynthesis; agmatine biosynthesis; agmatine from L-arginine: step 1/1. Catalyzes the biosynthesis of agmatine from arginine. This chain is Biosynthetic arginine decarboxylase, found in Shewanella denitrificans (strain OS217 / ATCC BAA-1090 / DSM 15013).